The following is a 565-amino-acid chain: NAD-dependent malic enzyme (565 aa).

The active-site Proton donor is tyrosine 104. Arginine 157 lines the NAD(+) pocket. The active-site Proton acceptor is the lysine 175. The a divalent metal cation site is built by glutamate 246, aspartate 247, and aspartate 270. NAD(+) is bound by residues aspartate 270 and asparagine 418.

It belongs to the malic enzymes family. As to quaternary structure, homotetramer. Mg(2+) is required as a cofactor. Mn(2+) serves as cofactor.

The catalysed reaction is (S)-malate + NAD(+) = pyruvate + CO2 + NADH. It catalyses the reaction oxaloacetate + H(+) = pyruvate + CO2. This is NAD-dependent malic enzyme from Yersinia enterocolitica serotype O:8 / biotype 1B (strain NCTC 13174 / 8081).